A 360-amino-acid polypeptide reads, in one-letter code: Peptide chain release factor 1 (360 aa).

N5-methylglutamine is present on glutamine 235.

The protein belongs to the prokaryotic/mitochondrial release factor family. Methylated by PrmC. Methylation increases the termination efficiency of RF1.

The protein localises to the cytoplasm. In terms of biological role, peptide chain release factor 1 directs the termination of translation in response to the peptide chain termination codons UAG and UAA. The chain is Peptide chain release factor 1 from Bordetella pertussis (strain Tohama I / ATCC BAA-589 / NCTC 13251).